Consider the following 169-residue polypeptide: Calcium-binding protein G (169 aa).

EF-hand domains follow at residues 9–44 (KIFQ…KMNG), 60–83 (VDMD…QAKK), 92–127 (AALA…QGYN), and 133–162 (DYVL…KRLA). Residues Asp-105, Asp-107, Asp-109, Lys-111, Glu-116, Asp-140, Asp-142, Asp-144, Tyr-146, and Glu-151 each coordinate Ca(2+).

This Dictyostelium discoideum (Social amoeba) protein is Calcium-binding protein G (cbpG).